The chain runs to 217 residues: Probable GTP-binding protein EngB (217 aa).

The region spanning 40–217 (DVPEIAFAGR…RAAVLQDAMG (178 aa)) is the EngB-type G domain. Residues 48–55 (GRSNVGKS), 75–79 (GRTQE), 95–98 (DMPG), 162–165 (TKAD), and 196–198 (TSS) contribute to the GTP site. Residues Ser-55 and Thr-77 each contribute to the Mg(2+) site.

The protein belongs to the TRAFAC class TrmE-Era-EngA-EngB-Septin-like GTPase superfamily. EngB GTPase family. Mg(2+) is required as a cofactor.

Functionally, necessary for normal cell division and for the maintenance of normal septation. The polypeptide is Probable GTP-binding protein EngB (Novosphingobium aromaticivorans (strain ATCC 700278 / DSM 12444 / CCUG 56034 / CIP 105152 / NBRC 16084 / F199)).